Reading from the N-terminus, the 526-residue chain is Cytochrome P450 4F5 (526 aa).

Cys470 lines the heme pocket.

It belongs to the cytochrome P450 family. Heme serves as cofactor. High expression in liver and kidney. Lower expression in brain.

The protein localises to the endoplasmic reticulum membrane. Its subcellular location is the microsome membrane. It carries out the reaction an organic molecule + reduced [NADPH--hemoprotein reductase] + O2 = an alcohol + oxidized [NADPH--hemoprotein reductase] + H2O + H(+). The chain is Cytochrome P450 4F5 (Cyp4f5) from Rattus norvegicus (Rat).